Reading from the N-terminus, the 200-residue chain is Peptidyl-tRNA hydrolase (200 aa).

A tRNA-binding site is contributed by Y15. The active-site Proton acceptor is H20. 3 residues coordinate tRNA: F66, N68, and N114.

The protein belongs to the PTH family. Monomer.

It localises to the cytoplasm. It catalyses the reaction an N-acyl-L-alpha-aminoacyl-tRNA + H2O = an N-acyl-L-amino acid + a tRNA + H(+). Functionally, hydrolyzes ribosome-free peptidyl-tRNAs (with 1 or more amino acids incorporated), which drop off the ribosome during protein synthesis, or as a result of ribosome stalling. Its function is as follows. Catalyzes the release of premature peptidyl moieties from peptidyl-tRNA molecules trapped in stalled 50S ribosomal subunits, and thus maintains levels of free tRNAs and 50S ribosomes. The sequence is that of Peptidyl-tRNA hydrolase from Ralstonia pickettii (strain 12J).